The primary structure comprises 411 residues: SH3 and cysteine-rich domain-containing protein 2 (411 aa).

A disordered region spans residues 1–29 (MTEMSEKENEPDDAATHSPPGTVSALQET). Over residues 19-29 (PPGTVSALQET) the composition is skewed to polar residues. Serine 48 is subject to Phosphoserine. The interval 64–95 (TEVLLTPPTPLPPPSPPPTASDRGLATPSPSP) is disordered. Over residues 70–82 (PPTPLPPPSPPPT) the composition is skewed to pro residues. The Phorbol-ester/DAG-type zinc finger occupies 110 to 161 (LHSFQEHVFKRASPCELCHQLIVGNSKQGLRCKMCKVSVHLWCSEEISHQQC). Disordered regions lie at residues 174 to 203 (SSPL…KVDP) and 219 to 288 (RSSF…ATLR). Residues 219 to 232 (RSSFSSTSESPTRS) show a composition bias toward low complexity. 2 consecutive SH3 domains span residues 292–351 (GPMY…RVRP) and 354–411 (NVWR…LTEI).

As to quaternary structure, interacts (via SH3 domains) with CACNA1S. Interacts (via SH3 domains) with CACNA1C. Has much lower affinity for CACNA1C than for CACNA1S.

It is found in the cytoplasm. The protein resides in the cytosol. The protein localises to the cell membrane. Its subcellular location is the sarcolemma. Plays a redundant role in promoting the expression of calcium channel CACNA1S at the cell membrane, and thereby contributes to increased channel activity. Slows down the inactivation rate of the calcium channel CACNA1C. This Homo sapiens (Human) protein is SH3 and cysteine-rich domain-containing protein 2 (STAC2).